A 256-amino-acid polypeptide reads, in one-letter code: Imidazole glycerol phosphate synthase subunit HisF (256 aa).

Active-site residues include Asp12 and Asp131.

Belongs to the HisA/HisF family. As to quaternary structure, heterodimer of HisH and HisF.

Its subcellular location is the cytoplasm. It catalyses the reaction 5-[(5-phospho-1-deoxy-D-ribulos-1-ylimino)methylamino]-1-(5-phospho-beta-D-ribosyl)imidazole-4-carboxamide + L-glutamine = D-erythro-1-(imidazol-4-yl)glycerol 3-phosphate + 5-amino-1-(5-phospho-beta-D-ribosyl)imidazole-4-carboxamide + L-glutamate + H(+). The protein operates within amino-acid biosynthesis; L-histidine biosynthesis; L-histidine from 5-phospho-alpha-D-ribose 1-diphosphate: step 5/9. IGPS catalyzes the conversion of PRFAR and glutamine to IGP, AICAR and glutamate. The HisF subunit catalyzes the cyclization activity that produces IGP and AICAR from PRFAR using the ammonia provided by the HisH subunit. The protein is Imidazole glycerol phosphate synthase subunit HisF of Thermobifida fusca (strain YX).